A 504-amino-acid chain; its full sequence is ATP synthase subunit alpha (504 aa).

169–176 contributes to the ATP binding site; that stretch reads GDRKTGKT.

The protein belongs to the ATPase alpha/beta chains family. In terms of assembly, F-type ATPases have 2 components, CF(1) - the catalytic core - and CF(0) - the membrane proton channel. CF(1) has five subunits: alpha(3), beta(3), gamma(1), delta(1), epsilon(1). CF(0) has three main subunits: a(1), b(2) and c(9-12). The alpha and beta chains form an alternating ring which encloses part of the gamma chain. CF(1) is attached to CF(0) by a central stalk formed by the gamma and epsilon chains, while a peripheral stalk is formed by the delta and b chains.

The protein localises to the cell membrane. The enzyme catalyses ATP + H2O + 4 H(+)(in) = ADP + phosphate + 5 H(+)(out). Functionally, produces ATP from ADP in the presence of a proton gradient across the membrane. The alpha chain is a regulatory subunit. This is ATP synthase subunit alpha from Lactiplantibacillus plantarum (strain ATCC BAA-793 / NCIMB 8826 / WCFS1) (Lactobacillus plantarum).